The sequence spans 401 residues: Nodal homolog 3-C (401 aa).

A signal peptide spans 1–18 (MAFLSLFLCLVFSSPLMA). The propeptide occupies 19-274 (MPPALQGRKA…KVNGFRRLRR (256 aa)). N-linked (GlcNAc...) asparagine glycans are attached at residues Asn168, Asn337, and Asn344. Disulfide bonds link Cys299-Cys365 and Cys328-Cys396.

Belongs to the TGF-beta family. Monomer. The propeptide region interacts with bmp4 in a non-covalent manner. As to expression, expressed in the dorsal marginal region of late blastula, becoming restricted to the Spemann organizer at the early gastrula stage.

Its subcellular location is the secreted. Its function is as follows. Exhibits mesoderm-dorsalizing activity and neural-inducing activity, but lacks mesoderm-inducing activity. Regulates the expression of specific mesodermal and neural genes. Induces convergent extension movements at the embryonic midline by activating the fgf signaling pathway to induce t/bra expression in the organizer region. Acts with wnt11 to induce Spemann organizer cells and induce axis formation. The unprocessed protein antagonizes bmp-signaling. The protein is Nodal homolog 3-C of Xenopus tropicalis (Western clawed frog).